The sequence spans 439 residues: Cln5-like protein 3 (439 aa).

The signal sequence occupies residues 1 to 24; that stretch reads MKNMLNIILTLTIIFIGLIKISIS. N-linked (GlcNAc...) asparagine glycosylation is found at asparagine 93, asparagine 112, asparagine 122, asparagine 138, asparagine 168, asparagine 219, asparagine 268, asparagine 289, asparagine 304, and asparagine 359. A helical transmembrane segment spans residues 371-391; it reads IIFISIAIGFGVVIILYISIG.

The protein belongs to the CLN5 family.

The protein resides in the membrane. This Dictyostelium discoideum (Social amoeba) protein is Cln5-like protein 3 (cln5lc).